The sequence spans 437 residues: Serine--tRNA ligase (437 aa).

Thr-244 to Glu-246 is a binding site for L-serine. Arg-275–Glu-277 contributes to the ATP binding site. An L-serine-binding site is contributed by Glu-298. Glu-362 to Ser-365 serves as a coordination point for ATP. Ser-397 is a binding site for L-serine.

Belongs to the class-II aminoacyl-tRNA synthetase family. Type-1 seryl-tRNA synthetase subfamily. In terms of assembly, homodimer. The tRNA molecule binds across the dimer.

The protein resides in the cytoplasm. It carries out the reaction tRNA(Ser) + L-serine + ATP = L-seryl-tRNA(Ser) + AMP + diphosphate + H(+). The catalysed reaction is tRNA(Sec) + L-serine + ATP = L-seryl-tRNA(Sec) + AMP + diphosphate + H(+). Its pathway is aminoacyl-tRNA biosynthesis; selenocysteinyl-tRNA(Sec) biosynthesis; L-seryl-tRNA(Sec) from L-serine and tRNA(Sec): step 1/1. Catalyzes the attachment of serine to tRNA(Ser). Is also able to aminoacylate tRNA(Sec) with serine, to form the misacylated tRNA L-seryl-tRNA(Sec), which will be further converted into selenocysteinyl-tRNA(Sec). This is Serine--tRNA ligase from Nitrosomonas eutropha (strain DSM 101675 / C91 / Nm57).